The chain runs to 509 residues: Light-independent protochlorophyllide reductase subunit B (509 aa).

Asp36 serves as a coordination point for [4Fe-4S] cluster. The active-site Proton donor is Asp295. Residue 430–431 coordinates substrate; sequence GM.

The protein belongs to the ChlB/BchB/BchZ family. Protochlorophyllide reductase is composed of three subunits; ChlL, ChlN and ChlB. Forms a heterotetramer of two ChlB and two ChlN subunits. Requires [4Fe-4S] cluster as cofactor.

Its subcellular location is the plastid. It is found in the chloroplast. It catalyses the reaction chlorophyllide a + oxidized 2[4Fe-4S]-[ferredoxin] + 2 ADP + 2 phosphate = protochlorophyllide a + reduced 2[4Fe-4S]-[ferredoxin] + 2 ATP + 2 H2O. Its pathway is porphyrin-containing compound metabolism; chlorophyll biosynthesis (light-independent). Functionally, component of the dark-operative protochlorophyllide reductase (DPOR) that uses Mg-ATP and reduced ferredoxin to reduce ring D of protochlorophyllide (Pchlide) to form chlorophyllide a (Chlide). This reaction is light-independent. The NB-protein (ChlN-ChlB) is the catalytic component of the complex. The polypeptide is Light-independent protochlorophyllide reductase subunit B (Mesostigma viride (Green alga)).